The sequence spans 75 residues: F1845 fimbrial adhesin operon regulatory protein DaaF (75 aa).

Its function is as follows. May have a possible regulatory function on the expression of the other daa genes. This chain is F1845 fimbrial adhesin operon regulatory protein DaaF (daaF), found in Escherichia coli.